Reading from the N-terminus, the 272-residue chain is 2-C-methyl-D-erythritol 4-phosphate cytidylyltransferase (272 aa).

Belongs to the IspD/TarI cytidylyltransferase family. IspD subfamily.

It catalyses the reaction 2-C-methyl-D-erythritol 4-phosphate + CTP + H(+) = 4-CDP-2-C-methyl-D-erythritol + diphosphate. The protein operates within isoprenoid biosynthesis; isopentenyl diphosphate biosynthesis via DXP pathway; isopentenyl diphosphate from 1-deoxy-D-xylulose 5-phosphate: step 2/6. Catalyzes the formation of 4-diphosphocytidyl-2-C-methyl-D-erythritol from CTP and 2-C-methyl-D-erythritol 4-phosphate (MEP). The protein is 2-C-methyl-D-erythritol 4-phosphate cytidylyltransferase of Xanthomonas oryzae pv. oryzae (strain PXO99A).